The chain runs to 89 residues: DNA/RNA-binding protein Alba (89 aa).

Residue Lys11 is modified to N6-acetyllysine.

It belongs to the histone-like Alba family. Acetylated. Acetylation at Lys-11 decreases DNA-binding affinity.

It is found in the cytoplasm. It localises to the chromosome. Binds double-stranded DNA tightly but without sequence specificity. Involved in DNA compaction. This Thermoplasma acidophilum (strain ATCC 25905 / DSM 1728 / JCM 9062 / NBRC 15155 / AMRC-C165) protein is DNA/RNA-binding protein Alba.